The sequence spans 624 residues: (-)-beta-phellandrene synthase 4, chloroplastic (624 aa).

A chloroplast-targeting transit peptide spans 1-48 (MAIVSSVPLASKSCLHKSLISSIHKLKPFCRTIPTLGMSRPGKSVMPS). A disordered region spans residues 41–60 (PGKSVMPSMSMSSPVSDDGV). Residues 44–56 (SVMPSMSMSSPVS) show a composition bias toward low complexity. Mg(2+) is bound by residues aspartate 375, aspartate 379, and aspartate 527. The short motif at 375–379 (DDMYD) is the DDXXD motif element.

It belongs to the terpene synthase family. Tpsd subfamily. Mg(2+) is required as a cofactor. Mn(2+) serves as cofactor.

It localises to the plastid. Its subcellular location is the chloroplast. The catalysed reaction is (2E)-geranyl diphosphate = (-)-beta-phellandrene + diphosphate. The protein operates within terpene metabolism; oleoresin biosynthesis. Functionally, terpene synthase (TPS) involved in the biosynthesis of monoterpene natural products included in conifer oleoresin secretions and volatile emissions; these compounds contribute to biotic and abiotic stress defense against herbivores and pathogens. Catalyzes the conversion of (2E)-geranyl diphosphate (GPP) to (-)-beta-phellandrene. In Picea sitchensis (Sitka spruce), this protein is (-)-beta-phellandrene synthase 4, chloroplastic.